Consider the following 468-residue polypeptide: UDP-N-acetylmuramate--L-alanine ligase (468 aa).

ATP is bound at residue 112 to 118 (GTHGKTT).

It belongs to the MurCDEF family.

It localises to the cytoplasm. The enzyme catalyses UDP-N-acetyl-alpha-D-muramate + L-alanine + ATP = UDP-N-acetyl-alpha-D-muramoyl-L-alanine + ADP + phosphate + H(+). It participates in cell wall biogenesis; peptidoglycan biosynthesis. Functionally, cell wall formation. This is UDP-N-acetylmuramate--L-alanine ligase from Bordetella pertussis (strain Tohama I / ATCC BAA-589 / NCTC 13251).